Reading from the N-terminus, the 491-residue chain is Phosphoethanolamine N-methyltransferase 1 (491 aa).

An N-acetylalanine modification is found at Ala2. S-adenosyl-L-homocysteine-binding residues include Gly61, Arg66, Asp82, Asp107, Val108, and Asn126. Positions 159, 164, 165, 169, and 176 each coordinate phosphocholine. N-methylethanolamine phosphate is bound by residues 245–246 (QY) and Tyr254. Tyr254 contributes to the phosphocholine binding site. Residues Val263, Ser264, Gly290, Asp312, Asp338, Cys339, and Arg355 each contribute to the S-adenosyl-L-homocysteine site. The phosphocholine site is built by Tyr386, Tyr400, Arg404, Tyr406, and Lys472. Residues Tyr386, Tyr400, 404–406 (RGY), and Lys472 contribute to the N-methylethanolamine phosphate site.

This sequence belongs to the class I-like SAM-binding methyltransferase superfamily. PEAMT family. As to expression, highly expressed in the meristem and elongation zones of the root. Expressed in differentiated root epidermal cells. Highly expressed in leaf vasculature.

It is found in the cytoplasm. It catalyses the reaction phosphoethanolamine + S-adenosyl-L-methionine = N-methylethanolamine phosphate + S-adenosyl-L-homocysteine + H(+). It carries out the reaction N-methylethanolamine phosphate + S-adenosyl-L-methionine = N,N-dimethylethanolamine phosphate + S-adenosyl-L-homocysteine + H(+). The enzyme catalyses N,N-dimethylethanolamine phosphate + S-adenosyl-L-methionine = phosphocholine + S-adenosyl-L-homocysteine + H(+). Its pathway is phospholipid metabolism; phosphatidylcholine biosynthesis; phosphocholine from phosphoethanolamine: step 1/1. Functionally, involved in phosphocholine biosynthesis. Catalyzes the N-methylation of phosphoethanolamine, phosphomonomethylethanolamine and phosphodimethylethanolamine, the three methylation steps required to convert phosphoethanolamine to phosphocholine (PC). Required for root system development and epidermal cell integrity through its role in choline and phospholipid metabolism. In association with NMT3, regulates PC homeostasis, phase transition at the shoot apex, coordinated organ development, and fertility. In association with NMT3, involved in phosphatidylcholine biosynthesis and vascular development. In association with NMT2, involved in the production of phosphatidylcholine in roots, essential for root development. In association with NMT2 produce phosphocholine mainly for leaf growth maintenance. Contributes to the regulation of overall root zonation dynamics through reactive oxygen species (ROS) and auxin-regulated cell differentiation. Participates in root development of primary root elongation under salt stress conditions by balancing reactive oxygen species (ROS) production and distribution through abscisic acid (ABA) signaling. The chain is Phosphoethanolamine N-methyltransferase 1 from Arabidopsis thaliana (Mouse-ear cress).